Consider the following 79-residue polypeptide: U-actitoxin-Oulsp1 (79 aa).

The first 21 residues, 1–21 (MNTKLVVVFLLSAILFVSVTA), serve as a signal peptide directing secretion. The propeptide occupies 22–43 (SRPGKDLERDEAYETYDDENKR). One can recognise a ShKT domain in the interval 45 to 79 (CKDVFPAATCRHAKSVGNCSSEKYKRNCAITCGAC). Intrachain disulfides connect C45-C79, C54-C72, and C63-C76. The tract at residues 67 to 68 (KY) is crucial for binding to potassium channels.

The protein belongs to the sea anemone type 1 potassium channel toxin family. Type 1b subfamily. Two similar peptides (OspTx2a-p1 and -p2) are obtained after synthesis and oxidative folding. They may differ by a D-Cys at position 76 (corresponding to OspTx2a-p2). Since C-terminal Cys residues are prone to racemization during solid-phase peptide synthesis, and if the presence of a D-amino acid is correct, it is probable that OspTx2a-p1 (L-Cys-76 form) corresponds to the native peptide.

Its subcellular location is the secreted. In terms of biological role, toxin that weakly blocks the two voltage-gated potassium channels on Kv1.2/KCNA2 (IC(50)=1.8-2.5 uM) and Kv1.6/KCNA6 (IC(50)=5.6-6.2 uM). This Oulactis sp. (Sea anemone) protein is U-actitoxin-Oulsp1.